A 357-amino-acid polypeptide reads, in one-letter code: Protein BMRF2 (357 aa).

Residues 1 to 11 are Virion surface-facing; that stretch reads MFSCKQHLSLG. Positions 12–32 form a transmembrane segment; it reads ACVFCLGLLASTPFIWCFVFA. The Virion surface portion of the chain corresponds to 33 to 46; that stretch reads NLLSLEIFSPWQTH. Positions 47 to 67 form a transmembrane segment; it reads VYRLGFPTACLMAVLWTLVPA. Over 68-70 the chain is Virion surface; the sequence is KHA. A membrane pass occupies residues 71-91; that stretch reads VRAVTPAIMLNIASALIFFSL. Topologically, residues 92–98 are virion surface; the sequence is RVYSTST. Residues 99 to 121 are membrane-embedded; the sequence is WVSAPCLFLANLPLLCLWPRLAI. Residues 122 to 133 lie on the Virion surface side of the membrane; the sequence is EIVYICPAIHQR. A transmembrane span lies at residues 134–154; sequence FFELGLLLACTIFALSVVSRA. The Virion surface segment spans residues 155–158; it reads LEVS. A membrane pass occupies residues 159 to 179; that stretch reads AVFMSPFFIFLALGSGSLAGA. Residues 180 to 217 are Virion surface-facing; the sequence is RRNQIYTSGLERRRSIFCARGDHSVASLKETLHKCPWD. Residues 199–201 carry the Integrin binding site motif; that stretch reads RGD. Residues 218-238 are membrane-embedded; the sequence is LLAISALTVLVVCVMIVLHVH. Residues 239–240 lie on the Virion surface side of the membrane; sequence AE. The segment at 241–261 is a transmembrane helix; that stretch reads VFFGLSRYLPLFLCGAMASGG. Over 262-267 the chain is Virion surface; that stretch reads LYLGHS. Positions 268 to 288 form a transmembrane segment; that stretch reads SIIACVMATLCTLTSVVVYFL. Residues 289–298 lie on the Virion surface side of the membrane; sequence HETLGPLGKT. Residues 299 to 319 are membrane-embedded; that stretch reads VLFISIFVYYFSGVAALSAAM. At 320–335 the chain is on the virion surface side; sequence RYKLKKFVNGPLVHLR. The hydrophobic stretch at 336–356 threads the membrane; that stretch reads VVYMCCFVFTFCEYLLVTFIK. Ser357 is a topological domain (virion surface).

The protein belongs to the herpesviridae BMRF2 family. Interacts with BDLF2. Interacts with host beta1 integrin family. Post-translationally, extensively glycosylated by O-linked oligosaccharides.

It localises to the virion membrane. The protein resides in the host cell membrane. Functionally, facilitates virus attachment to oral epithelial cells by binding to host beta1 integrin family. Participates in rearrangement of cellular actin to increase intercellular contacts by binding BDLF2 and thereby promote virus cell-to-cell spreading. The protein is Protein BMRF2 of Homo sapiens (Human).